Consider the following 4299-residue polypeptide: DNA-dependent protein kinase catalytic subunit (4299 aa).

The stretch at 551-590 (KDLNSTIKKENNNNNNNKNKNNNNNQTLTKEEISKSIKKL) forms a coiled coil. 4 disordered regions span residues 557–577 (IKKE…NNQT), 613–633 (DEND…DQDN), 878–917 (NSSD…MKFK), and 1206–1230 (SSSK…EDGT). 4 stretches are compositionally biased toward low complexity: residues 562-575 (NNNN…NNNN), 617-631 (NNSN…NNDQ), 878-893 (NSSD…IDSG), and 1206-1226 (SSSK…NNNS). Ser2789 carries the post-translational modification Phosphoserine; by autocatalysis. Phosphothreonine; by autocatalysis is present on residues Thr2814 and Thr2822. Over residues 2832-2867 (SSSQSYGGTNNNTGSSQLSSSSSSSGSQSSSQNNSS) the composition is skewed to low complexity. Disordered regions lie at residues 2832–2881 (SSSQ…PKLI) and 3535–3559 (TTSS…SSSQ). Residues 3031–3707 (KIKDISLNSN…YFPFKISSEQ (677 aa)) enclose the FAT domain. Positions 3887-4226 (FDTNVLVMGS…AKKKLELVNP (340 aa)) constitute a PI3K/PI4K catalytic domain. The segment at 3893 to 3899 (VMGSLRK) is G-loop. Residues 4092-4100 (GIGDRHLEN) are catalytic loop. Positions 4112–4137 (GIDFGHAFGTATQFLPIPELMPFRLT) are activation loop. Residues 4267-4299 (VCSSVKEQIDCLIDQSTDPNILSRAWVGWNGAL) form the FATC domain.

Belongs to the PI3/PI4-kinase family. DNAPK subfamily. Post-translationally, may be phosphorylated upon DNA damage. Could be autophosphorylated. Autophosphorylation induces a conformational change that leads to remodeling of the DNA-PK complex, requisite for efficient end processing and DNA repair. Autophosphorylated on Ser-2789, Thr-2814 and Thr-2822. Ser-2789 is a DNA damage-inducible phosphorylation site (inducible with ionizing radiation, IR).

It is found in the nucleus. Its subcellular location is the nucleolus. The enzyme catalyses L-seryl-[protein] + ATP = O-phospho-L-seryl-[protein] + ADP + H(+). The catalysed reaction is L-threonyl-[protein] + ATP = O-phospho-L-threonyl-[protein] + ADP + H(+). Its activity is regulated as follows. Inhibited by wortmannin. Activity of the enzyme seems to be attenuated by autophosphorylation. Serine/threonine-protein kinase that acts as a molecular sensor for DNA damage. Is recruited to DNA ends by the Ku70/Ku80 heterodimer and is involved in DNA non-homologous end joining (NHEJ) required for double-strand break (DSB) repair and V(D)J recombination. This activity is only apparent when DNA damage is administered in G1 phase of the cell cycle. Required for efficient signaling of DNA double-stranded breaks via phosphorylation of H2AX during G1. The protein is DNA-dependent protein kinase catalytic subunit (dnapkcs) of Dictyostelium discoideum (Social amoeba).